The primary structure comprises 858 residues: DNA mismatch repair protein MutS (858 aa).

An ATP-binding site is contributed by G613–S620.

This sequence belongs to the DNA mismatch repair MutS family.

Its function is as follows. This protein is involved in the repair of mismatches in DNA. It is possible that it carries out the mismatch recognition step. This protein has a weak ATPase activity. This is DNA mismatch repair protein MutS from Dehalococcoides mccartyi (strain CBDB1).